Reading from the N-terminus, the 173-residue chain is Shikimate kinase 1 (173 aa).

Residue 14 to 19 coordinates ATP; sequence GAGKST. Serine 18 is a binding site for Mg(2+). 3 residues coordinate substrate: aspartate 36, arginine 60, and glycine 82. Arginine 120 is an ATP binding site. Arginine 140 serves as a coordination point for substrate. ATP is bound at residue glutamine 157.

It belongs to the shikimate kinase family. In terms of assembly, monomer. Requires Mg(2+) as cofactor.

The protein resides in the cytoplasm. The enzyme catalyses shikimate + ATP = 3-phosphoshikimate + ADP + H(+). It participates in metabolic intermediate biosynthesis; chorismate biosynthesis; chorismate from D-erythrose 4-phosphate and phosphoenolpyruvate: step 5/7. In terms of biological role, catalyzes the specific phosphorylation of the 3-hydroxyl group of shikimic acid using ATP as a cosubstrate. The polypeptide is Shikimate kinase 1 (Yersinia pseudotuberculosis serotype O:1b (strain IP 31758)).